A 1859-amino-acid chain; its full sequence is U3 small nucleolar RNA-associated protein 10 (1859 aa).

Residues 258–278 (LGAYSVLAVLSAVAPLSIELL) traverse the membrane as a helical segment. An HEAT 1 repeat occupies 578 to 616 (VLPLLLIAFNDPSSHIRAAFAQLVQLVSEITKAIHENKK). A helical membrane pass occupies residues 1392–1412 (IVIASISAIVSIVNVLGIKTL). An HEAT 2 repeat occupies 1819-1857 (LVPHIAELLEDDDEAVEIEVREGLVRVIEKVLGEPLDRY).

The protein belongs to the HEATR1/UTP10 family. As to quaternary structure, component of the ribosomal small subunit (SSU) processome.

It localises to the nucleus. The protein resides in the nucleolus. The protein localises to the membrane. Functionally, involved in nucleolar processing of pre-18S ribosomal RNA. Involved in ribosome biosynthesis. The protein is U3 small nucleolar RNA-associated protein 10 of Lodderomyces elongisporus (strain ATCC 11503 / CBS 2605 / JCM 1781 / NBRC 1676 / NRRL YB-4239) (Yeast).